The sequence spans 197 residues: Segregation and condensation protein B (197 aa).

Belongs to the ScpB family. As to quaternary structure, homodimer. Homodimerization may be required to stabilize the binding of ScpA to the Smc head domains. Component of a cohesin-like complex composed of ScpA, ScpB and the Smc homodimer, in which ScpA and ScpB bind to the head domain of Smc. The presence of the three proteins is required for the association of the complex with DNA.

It localises to the cytoplasm. Participates in chromosomal partition during cell division. May act via the formation of a condensin-like complex containing Smc and ScpA that pull DNA away from mid-cell into both cell halves. The sequence is that of Segregation and condensation protein B from Bacillus pumilus (strain SAFR-032).